We begin with the raw amino-acid sequence, 136 residues long: MPTIQQLIRLGRSVKASKTASPALEKCPQKRGVCTRVYTTTPKKPNSALRKVARVRLSNKIEVTAYIPGEGHNLQEHSIVLIRGGRVKDLPGVRYHIVRGSLDTSGVADRKQSRSKYGAKQPKAGVPAPVKGKGKR.

3-methylthioaspartic acid is present on aspartate 89. Residues 101–136 form a disordered region; sequence SLDTSGVADRKQSRSKYGAKQPKAGVPAPVKGKGKR.

This sequence belongs to the universal ribosomal protein uS12 family. Part of the 30S ribosomal subunit. Contacts proteins S8 and S17. May interact with IF1 in the 30S initiation complex.

In terms of biological role, with S4 and S5 plays an important role in translational accuracy. Functionally, interacts with and stabilizes bases of the 16S rRNA that are involved in tRNA selection in the A site and with the mRNA backbone. Located at the interface of the 30S and 50S subunits, it traverses the body of the 30S subunit contacting proteins on the other side and probably holding the rRNA structure together. The combined cluster of proteins S8, S12 and S17 appears to hold together the shoulder and platform of the 30S subunit. This is Small ribosomal subunit protein uS12 from Pelodictyon phaeoclathratiforme (strain DSM 5477 / BU-1).